We begin with the raw amino-acid sequence, 172 residues long: HTH-type transcriptional regulator IscR (172 aa).

Residues 2–131 (RLTSKGRYAV…NNITLGELMR (130 aa)) form the HTH rrf2-type domain. Positions 28-51 (LADISERQGISLSYLEQLFSRLRK) form a DNA-binding region, H-T-H motif. Residues C92, C98, and C104 each contribute to the [2Fe-2S] cluster site.

[2Fe-2S] cluster serves as cofactor.

Regulates the transcription of several operons and genes involved in the biogenesis of Fe-S clusters and Fe-S-containing proteins. This chain is HTH-type transcriptional regulator IscR, found in Photobacterium profundum (strain SS9).